Here is a 483-residue protein sequence, read N- to C-terminus: MORN repeat-containing protein 1 (483 aa).

Ser-18 carries the post-translational modification Phosphoserine. MORN repeat units follow at residues 39–61 (YEGE…DGSY), 62–84 (YEGE…WSGN), 86–108 (YSGQ…AGGH), 109–131 (YEGE…DGQV), 132–154 (YQGS…NGDK), 155–177 (YEGD…DGST), and 178–200 (YKGQ…SGVT). Residues 392–427 (EKAGNRPKGDRSPPEVLSTAQEPLRGTNRSDGTTAE) are disordered. Basic and acidic residues predominate over residues 394–404 (AGNRPKGDRSP). The residue at position 403 (Ser-403) is a Phosphoserine. Residues 418-427 (TNRSDGTTAE) are compositionally biased toward polar residues.

The sequence is that of MORN repeat-containing protein 1 (Morn1) from Rattus norvegicus (Rat).